The sequence spans 497 residues: Probable cytosol aminopeptidase (497 aa).

The Mn(2+) site is built by lysine 267 and aspartate 272. Residue lysine 279 is part of the active site. Residues aspartate 290, aspartate 349, and glutamate 351 each coordinate Mn(2+). The active site involves arginine 353.

Belongs to the peptidase M17 family. Requires Mn(2+) as cofactor.

Its subcellular location is the cytoplasm. The enzyme catalyses Release of an N-terminal amino acid, Xaa-|-Yaa-, in which Xaa is preferably Leu, but may be other amino acids including Pro although not Arg or Lys, and Yaa may be Pro. Amino acid amides and methyl esters are also readily hydrolyzed, but rates on arylamides are exceedingly low.. It catalyses the reaction Release of an N-terminal amino acid, preferentially leucine, but not glutamic or aspartic acids.. Its function is as follows. Presumably involved in the processing and regular turnover of intracellular proteins. Catalyzes the removal of unsubstituted N-terminal amino acids from various peptides. The chain is Probable cytosol aminopeptidase from Pseudomonas entomophila (strain L48).